The primary structure comprises 65 residues: Large ribosomal subunit protein bL33c (65 aa).

Belongs to the bacterial ribosomal protein bL33 family.

It localises to the plastid. The protein localises to the chloroplast. The chain is Large ribosomal subunit protein bL33c from Chaetosphaeridium globosum (Charophycean green alga).